Here is a 188-residue protein sequence, read N- to C-terminus: dCTP deaminase (188 aa).

DCTP-binding positions include 111 to 116 (KSTYAR), 135 to 137 (TLE), Q156, Y170, and Q180. Catalysis depends on E137, which acts as the Proton donor/acceptor.

It belongs to the dCTP deaminase family. In terms of assembly, homotrimer.

The enzyme catalyses dCTP + H2O + H(+) = dUTP + NH4(+). Its pathway is pyrimidine metabolism; dUMP biosynthesis; dUMP from dCTP (dUTP route): step 1/2. Functionally, catalyzes the deamination of dCTP to dUTP. The sequence is that of dCTP deaminase from Pseudomonas putida (strain W619).